An 829-amino-acid polypeptide reads, in one-letter code: Leucine--tRNA ligase (829 aa).

Positions 34-44 (PYPSGNIHMGH) match the 'HIGH' region motif. The short motif at 591–595 (KMSKS) is the 'KMSKS' region element. Lysine 594 provides a ligand contact to ATP.

It belongs to the class-I aminoacyl-tRNA synthetase family.

It is found in the cytoplasm. It catalyses the reaction tRNA(Leu) + L-leucine + ATP = L-leucyl-tRNA(Leu) + AMP + diphosphate. The protein is Leucine--tRNA ligase of Ehrlichia canis (strain Jake).